The primary structure comprises 158 residues: U4/U6.U5 small nuclear ribonucleoprotein 27 kDa protein (158 aa).

Positions 1–30 are enriched in basic residues; sequence MGRSRSRTPPRRERRRSRSSSRDRERRRRE. A disordered region spans residues 1–100; the sequence is MGRSRSRTPP…ISAEDMQGKT (100 aa). A compositionally biased stretch (basic and acidic residues) spans 31 to 41; sequence RERSRSRDRDR. Over residues 42–62 the composition is skewed to basic residues; it reads RRSRSRSPHRRRSRSPRRHRS. Residues 69-86 show a composition bias toward basic and acidic residues; the sequence is RQKDRRDDDRKDVKEKPA.

The protein belongs to the SNUT3 family. As to quaternary structure, part of a tri-snRNP complex.

The protein localises to the nucleus. Its function is as follows. May play a role in mRNA splicing. In Danio rerio (Zebrafish), this protein is U4/U6.U5 small nuclear ribonucleoprotein 27 kDa protein (snrnp27).